Reading from the N-terminus, the 582-residue chain is Zinc finger protein somi-1 (582 aa).

Disordered regions lie at residues 179–251 (LRPE…NNTD) and 352–377 (SAEPMKRHRVEAHEKQSPKKKVKKEQ). Over residues 188-226 (TQKSTNGVHRSTSNSSAETLRNNSVSAATVSPSDDNSLN) the composition is skewed to polar residues. Low complexity predominate over residues 227–244 (SPALTSSGSAGSGTPPLG). Residues 352–368 (SAEPMKRHRVEAHEKQS) show a composition bias toward basic and acidic residues. A C2H2-type; Degenerate zinc finger spans residues 454–477 (YICEDCDFVTVYKGNMKRHLNTCH). A disordered region spans residues 513–582 (AHKANSSRGR…PPPPPPPMLL (70 aa)). Residues 551–570 (LLESLASSSSSMGGYSNGNN) show a composition bias toward low complexity. The span at 572-582 (QPPPPPPPMLL) shows a compositional bias: pro residues.

As to quaternary structure, may interact with swsn-9; the interaction promotes hypodermal differentiation. As to expression, expressed in hypodermal seam cells, the somatic gonad and vulval precursor cells, body wall muscle and head neurons.

Its subcellular location is the nucleus. In terms of biological role, DNA-binding protein which binds to the promoters of let-60, lin-14 and lin-28, possibly to regulate genes involved in hypodermal and vulval development. Together with miRNAs mir-84 and let-7 may direct terminal differentiation of the seam cells, exit from the molting cycle, and vulva formation. Does not regulate the expression of mir-84. May promote hypodermal differentiation in association with swsn-9, a component of SWI/SNF chromatin remodeling complexes. This is Zinc finger protein somi-1 from Caenorhabditis elegans.